The following is a 209-amino-acid chain: MADVAKFLDRVEGSLNRGREIDRILSSFKLNAYDVLDILPGMSVDDIRNLYRKKSLMIHPDKNRDNPKAADAFDILKKAESDLVNDKIRESLDSAYTAARNQLLKEKKLSPNSEDVHSDQFLFDLKVRWREILIADEVARRRARQLDLANQQREQARQDEIARERKRRVESEKVWEETRDNRVGNWQDFLHKTKKNNLKKKNKKPRVLG.

One can recognise a J domain in the interval 31 to 96 (NAYDVLDILP…KIRESLDSAY (66 aa)). 2 disordered regions span residues 149–175 (ANQQ…EKVW) and 187–209 (QDFL…RVLG). Basic and acidic residues predominate over residues 154–175 (EQARQDEIARERKRRVESEKVW). A compositionally biased stretch (basic residues) spans 192–209 (KTKKNNLKKKNKKPRVLG).

The sequence is that of J domain-containing protein spf31 (spf31) from Schizosaccharomyces pombe (strain 972 / ATCC 24843) (Fission yeast).